Reading from the N-terminus, the 434-residue chain is O-phosphoseryl-tRNA(Sec) selenium transferase (434 aa).

A tetramerization region spans residues 1 to 40; that stretch reads MGLNITGLIPKHMENRGKLTLKENLKIIENILEQRKAPEN. A pyridoxal 5'-phosphate-binding site is contributed by R71. The phosphate loop (P-loop) stretch occupies residues 92 to 102; that stretch reads GRSGNLIDPQP. Positions 93, 94, and 101 each coordinate substrate. The residue at position 277 (K277) is an N6-(pyridoxal phosphate)lysine. A substrate-binding site is contributed by R306.

It belongs to the SepSecS family. Homotetramer. The cofactor is pyridoxal 5'-phosphate.

It carries out the reaction O-phospho-L-seryl-tRNA(Sec) + selenophosphate + H2O = L-selenocysteinyl-tRNA(Sec) + 2 phosphate. It participates in aminoacyl-tRNA biosynthesis; selenocysteinyl-tRNA(Sec) biosynthesis; selenocysteinyl-tRNA(Sec) from L-seryl-tRNA(Sec) (archaeal/eukaryal route): step 2/2. Converts O-phosphoseryl-tRNA(Sec) to selenocysteinyl-tRNA(Sec) required for selenoprotein biosynthesis. The protein is O-phosphoseryl-tRNA(Sec) selenium transferase (spcS) of Methanocaldococcus jannaschii (strain ATCC 43067 / DSM 2661 / JAL-1 / JCM 10045 / NBRC 100440) (Methanococcus jannaschii).